We begin with the raw amino-acid sequence, 273 residues long: 4-hydroxy-tetrahydrodipicolinate reductase (273 aa).

Residues 12–17 (GAGGRM) and E38 contribute to the NAD(+) site. Residue R39 coordinates NADP(+). NAD(+) contacts are provided by residues 102–104 (GTT) and 126–129 (AANF). The active-site Proton donor/acceptor is the H159. (S)-2,3,4,5-tetrahydrodipicolinate is bound at residue H160. K163 acts as the Proton donor in catalysis. Position 169-170 (169-170 (GT)) interacts with (S)-2,3,4,5-tetrahydrodipicolinate.

This sequence belongs to the DapB family. Homotetramer.

The protein resides in the cytoplasm. The catalysed reaction is (S)-2,3,4,5-tetrahydrodipicolinate + NAD(+) + H2O = (2S,4S)-4-hydroxy-2,3,4,5-tetrahydrodipicolinate + NADH + H(+). It carries out the reaction (S)-2,3,4,5-tetrahydrodipicolinate + NADP(+) + H2O = (2S,4S)-4-hydroxy-2,3,4,5-tetrahydrodipicolinate + NADPH + H(+). It participates in amino-acid biosynthesis; L-lysine biosynthesis via DAP pathway; (S)-tetrahydrodipicolinate from L-aspartate: step 4/4. In terms of biological role, catalyzes the conversion of 4-hydroxy-tetrahydrodipicolinate (HTPA) to tetrahydrodipicolinate. The sequence is that of 4-hydroxy-tetrahydrodipicolinate reductase from Salmonella schwarzengrund (strain CVM19633).